The chain runs to 607 residues: Glutamine--fructose-6-phosphate aminotransferase [isomerizing] (607 aa).

Cysteine 2 serves as the catalytic Nucleophile; for GATase activity. In terms of domain architecture, Glutamine amidotransferase type-2 spans 2 to 217; that stretch reads CGIIGIIGND…DGDWAVLTRN (216 aa). 2 consecutive SIS domains span residues 283-422 and 455-597; these read IGID…ARGA and VCHD…VDQP. Lysine 602 (for Fru-6P isomerization activity) is an active-site residue.

In terms of assembly, homodimer.

It is found in the cytoplasm. The enzyme catalyses D-fructose 6-phosphate + L-glutamine = D-glucosamine 6-phosphate + L-glutamate. In terms of biological role, catalyzes the first step in hexosamine metabolism, converting fructose-6P into glucosamine-6P using glutamine as a nitrogen source. The polypeptide is Glutamine--fructose-6-phosphate aminotransferase [isomerizing] (Brucella suis biovar 1 (strain 1330)).